We begin with the raw amino-acid sequence, 255 residues long: Folate receptor alpha (255 aa).

An N-terminal signal peptide occupies residues 1 to 24 (MAHLMTVQLLLLVMWMAECAQSRA). 8 disulfides stabilise this stretch: cysteine 35–cysteine 63, cysteine 55–cysteine 103, cysteine 64–cysteine 107, cysteine 87–cysteine 173, cysteine 94–cysteine 144, cysteine 133–cysteine 207, cysteine 137–cysteine 187, and cysteine 150–cysteine 167. Residue asparagine 67 is glycosylated (N-linked (GlcNAc...) asparagine). Residues aspartate 101, tyrosine 105, 122–126 (WRKER), 155–160 (HKGWNW), and serine 194 each bind folate. A glycan (N-linked (GlcNAc...) asparagine) is linked at asparagine 159. An N-linked (GlcNAc...) asparagine glycan is attached at asparagine 199. Serine 232 carries GPI-anchor amidated serine lipidation. Residues 233–255 (GAGFHGTWPLLCSLSLVLLWVIS) constitute a propeptide, removed in mature form.

It belongs to the folate receptor family. The secreted form is derived from the membrane-bound form either by cleavage of the GPI anchor, or/and by proteolysis catalyzed by a metalloprotease. As to expression, detected in kidney proximal tubules (at protein level).

The protein localises to the cell membrane. It localises to the apical cell membrane. Its subcellular location is the basolateral cell membrane. It is found in the secreted. The protein resides in the cytoplasmic vesicle. The protein localises to the clathrin-coated vesicle. It localises to the endosome. Binds to folate and reduced folic acid derivatives and mediates delivery of 5-methyltetrahydrofolate and folate analogs into the interior of cells. Has high affinity for folate and folic acid analogs at neutral pH. Exposure to slightly acidic pH after receptor endocytosis triggers a conformation change that strongly reduces its affinity for folates and mediates their release. Required for normal embryonic development and normal cell proliferation. Required for renal folate reabsorption. This is Folate receptor alpha (Folr1) from Mus musculus (Mouse).